We begin with the raw amino-acid sequence, 314 residues long: Polyamine aminopropyltransferase (314 aa).

Residues 4–241 (GMYFFEHVTP…LNFGFLLASD (238 aa)) form the PABS domain. Gln33 lines the S-methyl-5'-thioadenosine pocket. The spermidine site is built by His64 and Glu88. S-methyl-5'-thioadenosine-binding positions include Asp108 and 140–141 (DA). Catalysis depends on Asp158, which acts as the Proton acceptor. Residue Pro168 coordinates S-methyl-5'-thioadenosine.

This sequence belongs to the spermidine/spermine synthase family. Homodimer or homotetramer.

It is found in the cytoplasm. It carries out the reaction S-adenosyl 3-(methylsulfanyl)propylamine + putrescine = S-methyl-5'-thioadenosine + spermidine + H(+). It participates in amine and polyamine biosynthesis; spermidine biosynthesis; spermidine from putrescine: step 1/1. Functionally, catalyzes the irreversible transfer of a propylamine group from the amino donor S-adenosylmethioninamine (decarboxy-AdoMet) to putrescine (1,4-diaminobutane) to yield spermidine. This chain is Polyamine aminopropyltransferase, found in Thermus thermophilus (strain ATCC BAA-163 / DSM 7039 / HB27).